Consider the following 387-residue polypeptide: 1,3-propanediol dehydrogenase (387 aa).

This sequence belongs to the iron-containing alcohol dehydrogenase family. As to quaternary structure, homooctamer. The cofactor is Fe cation.

The enzyme catalyses propane-1,3-diol + NAD(+) = 3-hydroxypropanal + NADH + H(+). With respect to regulation, inhibited by the metal chelator 1,10-phenanthroline. Its function is as follows. Catalyzes the reduction of 3-hydroxypropanal. Is considerably less active with glyceraldehyde, propionaldehyde, acetaldehyde, and butyraldehyde. Also catalyzes the oxidation of various primary, secondary, and tertiary alcohols. Is most active with substrates containing two primary alcohol groups separated by one or two carbon atoms. 1,3-propanediol is the preferred substrate. This Citrobacter freundii protein is 1,3-propanediol dehydrogenase.